A 247-amino-acid chain; its full sequence is Submandibular gland secretory Glx-rich protein CB (247 aa).

Positions 1-18 are cleaved as a signal peptide; that stretch reads MLVVLLTAALLALSSAQG. Positions 14–219 are disordered; the sequence is SSAQGTDEEV…PQHYRGRPPK (206 aa). Composition is skewed to low complexity over residues 39 to 50, 58 to 71, 81 to 93, 104 to 116, 126 to 139, 150 to 159, and 178 to 196; these read PVDSGSDPPSAD, EGESAPPANEEPPA, QQEPTQAENQEPP, QQQQPTQAENQEPP, QQESTQAENQ, and VESPPSSPENSQEQPQQTN. 5 tandem repeats follow at residues 67–89, 90–112, 113–135, 136–158, and 159–181. Residues 67-181 are 5 X 23 AA tandem repeats; sequence EEPPATSGSE…QPEEGNVESP (115 aa). Over residues 197–212 the composition is skewed to basic and acidic residues; that stretch reads PEEKPPAPKTQEEPQH.

In terms of tissue distribution, submandibular gland acinar cells.

The protein localises to the secreted. GRP proteins have a marked affinity for hydroxyapatite. They may play a role in the formation of the protective acquired pellicle at the saliva-tooth interface. This chain is Submandibular gland secretory Glx-rich protein CB (Grpcb), found in Rattus norvegicus (Rat).